A 73-amino-acid chain; its full sequence is Sec-independent protein translocase protein TatA (73 aa).

Residues 1–21 (MGSFSIWHWLIVLVIVMLVFG) traverse the membrane as a helical segment. Residues 44-73 (KSAEDPNEQIPQSTTTAEKTVDVQAKDINK) form a disordered region. Positions 52-61 (QIPQSTTTAE) are enriched in polar residues. Residues 62-73 (KTVDVQAKDINK) show a composition bias toward basic and acidic residues.

The protein belongs to the TatA/E family. As to quaternary structure, the Tat system comprises two distinct complexes: a TatABC complex, containing multiple copies of TatA, TatB and TatC subunits, and a separate TatA complex, containing only TatA subunits. Substrates initially bind to the TatABC complex, which probably triggers association of the separate TatA complex to form the active translocon.

It is found in the cell inner membrane. In terms of biological role, part of the twin-arginine translocation (Tat) system that transports large folded proteins containing a characteristic twin-arginine motif in their signal peptide across membranes. TatA could form the protein-conducting channel of the Tat system. The protein is Sec-independent protein translocase protein TatA of Polynucleobacter asymbioticus (strain DSM 18221 / CIP 109841 / QLW-P1DMWA-1) (Polynucleobacter necessarius subsp. asymbioticus).